Reading from the N-terminus, the 694-residue chain is Long-chain-fatty-acid--CoA ligase 3 (694 aa).

Residues 1–25 form a disordered region; the sequence is MSEQHSVAVGKAANEHETAPRRNVR. An N-acetylserine modification is found at S2. 269–280 contributes to the ATP binding site; sequence YTSGSISAPKGV. Residues 527-576 carry the FACS motif; that stretch reads DGWFRTGDIVEWTPKGQLKIIDRRKNLVKTLNGEYIALEKLESVYRSNSY.

The protein belongs to the ATP-dependent AMP-binding enzyme family. Interacts with FRK1. Mg(2+) serves as cofactor.

It localises to the cell membrane. The catalysed reaction is a long-chain fatty acid + ATP + CoA = a long-chain fatty acyl-CoA + AMP + diphosphate. It catalyses the reaction (9Z)-octadecenoate + ATP + CoA = (9Z)-octadecenoyl-CoA + AMP + diphosphate. It carries out the reaction hexadecanoate + ATP + CoA = hexadecanoyl-CoA + AMP + diphosphate. The enzyme catalyses (9Z)-hexadecenoate + ATP + CoA = (9Z)-hexadecenoyl-CoA + AMP + diphosphate. The catalysed reaction is (9Z)-tetradecenoate + ATP + CoA = (9Z)-tetradecenoyl-CoA + AMP + diphosphate. It catalyses the reaction (9Z,12Z)-octadecadienoate + ATP + CoA = (9Z,12Z)-octadecadienoyl-CoA + AMP + diphosphate. Its function is as follows. Activates endogenous long-chain fatty acids (LCFA) by esterification of the fatty acids into metabolically active CoA-thioesters for subsequent degradation or incorporation into phospholipids. Acts preferentially on C16 and C18 fatty acids with a cis-double bond at C-9-C-10. This is Long-chain-fatty-acid--CoA ligase 3 (FAA3) from Saccharomyces cerevisiae (strain ATCC 204508 / S288c) (Baker's yeast).